The chain runs to 209 residues: Ribosomal RNA large subunit methyltransferase E (209 aa).

Gly-63, Trp-65, Asp-83, Asp-99, and Asp-124 together coordinate S-adenosyl-L-methionine. Catalysis depends on Lys-164, which acts as the Proton acceptor.

The protein belongs to the class I-like SAM-binding methyltransferase superfamily. RNA methyltransferase RlmE family.

It is found in the cytoplasm. It catalyses the reaction uridine(2552) in 23S rRNA + S-adenosyl-L-methionine = 2'-O-methyluridine(2552) in 23S rRNA + S-adenosyl-L-homocysteine + H(+). In terms of biological role, specifically methylates the uridine in position 2552 of 23S rRNA at the 2'-O position of the ribose in the fully assembled 50S ribosomal subunit. The sequence is that of Ribosomal RNA large subunit methyltransferase E from Vibrio cholerae serotype O1 (strain ATCC 39541 / Classical Ogawa 395 / O395).